The chain runs to 119 residues: Large ribosomal subunit protein bL20 (119 aa).

It belongs to the bacterial ribosomal protein bL20 family.

In terms of biological role, binds directly to 23S ribosomal RNA and is necessary for the in vitro assembly process of the 50S ribosomal subunit. It is not involved in the protein synthesizing functions of that subunit. The sequence is that of Large ribosomal subunit protein bL20 from Methylocella silvestris (strain DSM 15510 / CIP 108128 / LMG 27833 / NCIMB 13906 / BL2).